Reading from the N-terminus, the 229-residue chain is C-&gt;U-editing enzyme APOBEC-1 (229 aa).

The CMP/dCMP-type deaminase domain occupies 10–134; the sequence is VDPTLRRRIE…QRNRQGLRDL (125 aa). Histidine 61 serves as a coordination point for Zn(2+). Glutamate 63 functions as the Proton donor in the catalytic mechanism. Positions 93 and 96 each coordinate Zn(2+).

This sequence belongs to the cytidine and deoxycytidylate deaminase family. In terms of assembly, homodimer. Interacts with A1CF; form an mRNA editing complex. Interacts with RBM47; form an mRNA editing complex. Found in a complex with CELF2/CUGBP2 and A1CF. Interacts with HNRPAB. Interacts with SYNCRIP. It depends on Zn(2+) as a cofactor.

It is found in the cytoplasm. The protein resides in the nucleus. The catalysed reaction is a cytidine in mRNA + H2O + H(+) = a uridine in mRNA + NH4(+). It carries out the reaction cytidine(6666) in apoB mRNA + H2O + H(+) = uridine(6666) in apoB mRNA + NH4(+). Functionally, cytidine deaminase catalyzing the cytidine to uridine postranscriptional editing of a variety of mRNAs. Form complexes with cofactors that confer differential editing activity and selectivity. Responsible for the postranscriptional editing of a CAA codon for Gln to a UAA codon for stop in the apolipoprotein B mRNA. Also involved in CGA (Arg) to UGA (Stop) editing in the NF1 mRNA. May also play a role in the epigenetic regulation of gene expression by participating in DNA demethylation. This is C-&gt;U-editing enzyme APOBEC-1 from Mesocricetus auratus (Golden hamster).